A 190-amino-acid chain; its full sequence is Pyridoxal 5'-phosphate synthase subunit PdxT (190 aa).

An L-glutamine-binding site is contributed by 46–48; it reads GES. Residue Cys78 is the Nucleophile of the active site. L-glutamine-binding positions include Arg108 and 137 to 138; that span reads IR. Active-site charge relay system residues include His174 and Glu176.

The protein belongs to the glutaminase PdxT/SNO family. In terms of assembly, in the presence of PdxS, forms a dodecamer of heterodimers. Only shows activity in the heterodimer.

It carries out the reaction aldehydo-D-ribose 5-phosphate + D-glyceraldehyde 3-phosphate + L-glutamine = pyridoxal 5'-phosphate + L-glutamate + phosphate + 3 H2O + H(+). The catalysed reaction is L-glutamine + H2O = L-glutamate + NH4(+). It participates in cofactor biosynthesis; pyridoxal 5'-phosphate biosynthesis. Its function is as follows. Catalyzes the hydrolysis of glutamine to glutamate and ammonia as part of the biosynthesis of pyridoxal 5'-phosphate. The resulting ammonia molecule is channeled to the active site of PdxS. The polypeptide is Pyridoxal 5'-phosphate synthase subunit PdxT (Herpetosiphon aurantiacus (strain ATCC 23779 / DSM 785 / 114-95)).